We begin with the raw amino-acid sequence, 380 residues long: MDFRLNDEQELFVDGVRELMASENWEAYFAQCDRESKYPERFVKALADMEIDNLLIPEEHGGLNAGFVTVAAIWMELGRLGAPTYVLYQLPGGFNTVLREGTQEQIDKIMAFRGTGKQMWNSAITEPGAGSDVGSLQTTYTRKNGKVYLNGSKCFITSSAYTPYIVVMSRDAASPDKPIFTEWFVDMSKPGIKVTKLEKLGLRMDSCCEITFDNVELEEKDMFGREGNGFNRVKEEFDHERFLVALTNYGTAMCAFEDAARYANQRVQFGETIGRFQLIQEKFAHMAIKLNSMRNMLYETAWKSDNGLITSGDAAMCKYFCANAAFEVVDSAMQVLGGVGIAGEHRIARFWRDLRVDRVSGGSDEMQILTLGRAVLKQYR.

It belongs to the acyl-CoA dehydrogenase family. In terms of assembly, homotetramer. FAD is required as a cofactor.

The protein localises to the cytoplasm. It carries out the reaction 4-(trimethylamino)butanoyl-CoA + oxidized [electron-transfer flavoprotein] + H(+) = crotonobetainyl-CoA + reduced [electron-transfer flavoprotein]. The protein operates within amine and polyamine metabolism; carnitine metabolism. Functionally, catalyzes the reduction of crotonobetainyl-CoA to gamma-butyrobetainyl-CoA. The protein is Crotonobetainyl-CoA reductase of Proteus sp. (strain LE138).